A 62-amino-acid chain; its full sequence is Alpha-elapitoxin-Nn2a (62 aa).

The disordered stretch occupies residues 1–20 (LECHNQQSSQTPTTTDCSGG). 4 disulfides stabilise this stretch: Cys-3–Cys-24, Cys-17–Cys-41, Cys-43–Cys-54, and Cys-55–Cys-60.

This sequence belongs to the three-finger toxin family. Short-chain subfamily. Type I alpha-neurotoxin sub-subfamily. As to expression, expressed by the venom gland.

It is found in the secreted. Its function is as follows. Nicotinic acetylcholine receptor antagonist. Binds to muscle nicotinic acetylcholine receptor (nAChR) and inhibits acetylcholine from binding to the receptor, thereby impairing neuromuscular transmission. Produces peripheral paralysis by blocking neuromuscular transmission at the postsynaptic site. Induces concentration-dependent inhibition of indirect twitches and abolishes contractile responses of tissues to exogenous acetylcholine and carbachol, in the chick biventer cervicis nerve-muscle preparation at 100-300 nM (in vitro). Prior incubation of tissues with Indian polyvalent antivenom (1 ml/0.6 mg) prevents the neurotoxic effects at 100 nM (in vitro). Addition of Indian polyvalent antivenom (1 ml/0.6 mg) at the t90 time point does not reverse the neurotoxic effects (in vitro). Displays non-competitive antagonism of concentration-response curves to carbachol, with a pA2 of 8.01 (in vitro). The protein is Alpha-elapitoxin-Nn2a of Naja naja (Indian cobra).